A 180-amino-acid polypeptide reads, in one-letter code: Nucleoside triphosphate/diphosphate phosphatase (180 aa).

The Proton donor role is filled by Arg-26. Mg(2+) is bound by residues Asn-90, Asp-106, Asp-108, Asp-110, Asp-123, and Glu-126.

This sequence belongs to the Ntdp family. Mg(2+) is required as a cofactor.

It catalyses the reaction a ribonucleoside 5'-triphosphate + H2O = a ribonucleoside 5'-diphosphate + phosphate + H(+). The catalysed reaction is a ribonucleoside 5'-diphosphate + H2O = a ribonucleoside 5'-phosphate + phosphate + H(+). Its function is as follows. Has nucleoside phosphatase activity towards nucleoside triphosphates and nucleoside diphosphates. In Staphylococcus aureus (strain MRSA252), this protein is Nucleoside triphosphate/diphosphate phosphatase.